Reading from the N-terminus, the 266-residue chain is MIALALPAQDSGEFNPPGIEEMHLPAILPWGAADGFSKQMLLVILSVVIIATFFLLAARKQQLVPGKLQFAGEAAYGFVRNSIAKDIIGGKDFMKYVPLLFSLFFFILVNNIYGAIPLIQLPSFSHVGGAYVLAAIVYLTWIAIGVKKNGIKYFKLATVPTGVPVYILPIVIPIEIISNFLVRPVTHSLRLFATMLAGHLIVMIAGSGIEYLVMQENILLKGTSVLVLVGAIAMYMLEALIMALQAYVFTLLTAIYIEGALHADSH.

6 consecutive transmembrane segments (helical) span residues 38 to 58 (KQML…LLAA), 99 to 119 (LLFS…IPLI), 126 to 146 (HVGG…AIGV), 162 to 182 (GVPV…NFLV), 191 to 211 (LFAT…GIEY), and 224 to 244 (SVLV…IMAL).

The protein belongs to the ATPase A chain family. F-type ATPases have 2 components, CF(1) - the catalytic core - and CF(0) - the membrane proton channel. CF(1) has five subunits: alpha(3), beta(3), gamma(1), delta(1), epsilon(1). CF(0) has three main subunits: a(1), b(2) and c(9-12). The alpha and beta chains form an alternating ring which encloses part of the gamma chain. CF(1) is attached to CF(0) by a central stalk formed by the gamma and epsilon chains, while a peripheral stalk is formed by the delta and b chains.

The protein localises to the cell membrane. Its function is as follows. Key component of the proton channel; it plays a direct role in the translocation of protons across the membrane. The protein is ATP synthase subunit a of Arthrobacter sp. (strain FB24).